Here is a 168-residue protein sequence, read N- to C-terminus: DOMON domain-containing protein Y73F4A.2 (168 aa).

The N-terminal stretch at 1-18 (MFRSIAVLSALLFAFASA) is a signal peptide. The 118-residue stretch at 26 to 143 (SDFEVYWRFA…CQKWRFVKSG (118 aa)) folds into the DOMON domain. N-linked (GlcNAc...) asparagine glycosylation occurs at asparagine 36. The interval 148–168 (GQLTRNDKSPKEKKVCPMECN) is disordered. Basic and acidic residues predominate over residues 152 to 168 (RNDKSPKEKKVCPMECN).

It is found in the secreted. The chain is DOMON domain-containing protein Y73F4A.2 from Caenorhabditis elegans.